The chain runs to 404 residues: Tryptophan synthase beta chain (404 aa).

Residue Lys98 is modified to N6-(pyridoxal phosphate)lysine.

This sequence belongs to the TrpB family. In terms of assembly, tetramer of two alpha and two beta chains. Pyridoxal 5'-phosphate serves as cofactor.

The enzyme catalyses (1S,2R)-1-C-(indol-3-yl)glycerol 3-phosphate + L-serine = D-glyceraldehyde 3-phosphate + L-tryptophan + H2O. The protein operates within amino-acid biosynthesis; L-tryptophan biosynthesis; L-tryptophan from chorismate: step 5/5. Its function is as follows. The beta subunit is responsible for the synthesis of L-tryptophan from indole and L-serine. The protein is Tryptophan synthase beta chain of Rhodopseudomonas palustris (strain ATCC BAA-98 / CGA009).